Here is a 3987-residue protein sequence, read N- to C-terminus: Hybrid PKS-NRPS synthetase buaA (3987 aa).

A Ketosynthase family 3 (KS3) domain is found at Asn-5–Ser-438. Residues Cys-176, His-315, and His-358 each act as for beta-ketoacyl synthase activity in the active site. The tract at residues Val-546–Ser-872 is malonyl-CoA:ACP transacylase (MAT) domain. The interval His-939 to Ala-1072 is N-terminal hotdog fold. Positions His-939–Ser-1240 constitute a PKS/mFAS DH domain. Positions Glu-940–Thr-1238 are dehydratase (DH) domain. Residue His-970 is the Proton acceptor; for dehydratase activity of the active site. A C-terminal hotdog fold region spans residues Met-1087–Ser-1240. Asp-1147 (proton donor; for dehydratase activity) is an active-site residue. The segment at Tyr-1399–Met-1583 is methyltransferase (MT) domain. Positions Thr-2113–Gly-2285 are ketoreductase (KR) domain. Residues Arg-2397–Met-2473 enclose the Carrier 1 domain. Ser-2433 is modified (O-(pantetheine 4'-phosphoryl)serine). A disordered region spans residues Ala-2489–Asp-2561. Basic and acidic residues predominate over residues His-2514–Glu-2525. Over residues Ser-2532–Ala-2550 the composition is skewed to low complexity. A condensation (C) domain region spans residues Met-2582–Glu-3001. The interval Leu-3042–Ala-3448 is adenylation (A) (KR) domain. Residues Ala-3564–Gln-3644 form the Carrier 2 domain. Ser-3604 is modified (O-(pantetheine 4'-phosphoryl)serine). The interval Thr-3680–Ala-3916 is reductase (R) domain.

The protein in the C-terminal section; belongs to the NRP synthetase family.

Its pathway is mycotoxin biosynthesis. Its function is as follows. Hybrid PKS-NRPS synthetase; part of the gene cluster that mediates the biosynthesis of burnettramic acids, an unusual class of bolaamphiphilic pyrrolizidinediones that display potent antibacterial, antifungal, and cytotoxic activities. The first step of the biosynthesis of burnettramic acids is the hydroxylation of proline by the proline hydroxylase buaE to generate 4-hydroxyproline. The PKS-NRPS buaA and trans-enoyl reductase buaC construct the highly reduced polyketide chain, and the condensation (C) domain of buaA then catalyzes the amide bond formation with the activated 4-hydroxyproline. This is followed by the R domain releasing the nascent polyketide-peptide directly via a Dieckmann condensation to afford a tetramic acid fused to the hydroxyproline, generating the bicyclic pyrrolidinedione moiety. The cytochrome P450 monooxygenases buaD and buaG are likely responsible for the multiple hydroxylations on the polyketide chain and its terminus, although in a heterologous context, buaD does not appear to be required. Therefore, while buaG may be a multifunctional cytochrome P450 monooxygenase, it cannot be ruled out that the two secondary alcohols on the polyketide chain could have an acetate origin. Finally, the glycosyltransferase buaB transfers beta-D-mannose to the aglycone burnettramic acid A to form burnettramic acid A. Burnettramic acid B is a minor cis-pyrrolizidine epimer of burnettramic acid A and it is likely that small amounts of it form naturally in acidic environments. The sequence is that of Hybrid PKS-NRPS synthetase buaA from Petromyces alliaceus (Aspergillus alliaceus).